A 535-amino-acid chain; its full sequence is Ribonuclease Y (535 aa).

A helical transmembrane segment spans residues 30–50 (IWALPALVIGLAIGAGIGILI). Positions 225-285 (TVSTVALPSE…VRREVARLAL (61 aa)) constitute a KH domain. The region spanning 351–444 (VLQHSLECAL…VQAVDAISGG (94 aa)) is the HD domain.

The protein belongs to the RNase Y family.

Its subcellular location is the cell membrane. In terms of biological role, endoribonuclease that initiates mRNA decay. This Roseiflexus sp. (strain RS-1) protein is Ribonuclease Y.